A 138-amino-acid chain; its full sequence is Large ribosomal subunit protein bL19 (138 aa).

This sequence belongs to the bacterial ribosomal protein bL19 family.

Functionally, this protein is located at the 30S-50S ribosomal subunit interface and may play a role in the structure and function of the aminoacyl-tRNA binding site. The chain is Large ribosomal subunit protein bL19 from Rickettsia typhi (strain ATCC VR-144 / Wilmington).